Reading from the N-terminus, the 257-residue chain is MDVIPAIDLLDGKCVRLVQGNYDKVNVFHDDPLKVALYWQRLGAPRLHLVDLDAAKTGEPRNYDLIGKIVASLEIPVQVGGGLRSRQAVADLFLQGVNRAILGTVALENPKLVASLAAEYPGRIWVGLDARDGYVATRGWLETSKILATDLAQNMAAMGVAGFVYTDIQRDGTLQGPNIPALRQLLAVTNRPVIASGGVSSLNDILSLFALTPHGLVGAIVGKALYTKAMDLREAVRAVGQGRWQDIPPDLGSTTWA.

D8 serves as the catalytic Proton acceptor. Residue D129 is the Proton donor of the active site.

The protein belongs to the HisA/HisF family.

It is found in the cytoplasm. It carries out the reaction 1-(5-phospho-beta-D-ribosyl)-5-[(5-phospho-beta-D-ribosylamino)methylideneamino]imidazole-4-carboxamide = 5-[(5-phospho-1-deoxy-D-ribulos-1-ylimino)methylamino]-1-(5-phospho-beta-D-ribosyl)imidazole-4-carboxamide. Its pathway is amino-acid biosynthesis; L-histidine biosynthesis; L-histidine from 5-phospho-alpha-D-ribose 1-diphosphate: step 4/9. This chain is 1-(5-phosphoribosyl)-5-[(5-phosphoribosylamino)methylideneamino] imidazole-4-carboxamide isomerase, found in Thermosynechococcus vestitus (strain NIES-2133 / IAM M-273 / BP-1).